The sequence spans 329 residues: 4-hydroxythreonine-4-phosphate dehydrogenase (329 aa).

Residues His136 and Thr137 each coordinate substrate. Positions 166, 211, and 266 each coordinate a divalent metal cation. Substrate contacts are provided by Lys274, Asn283, and Arg292.

Belongs to the PdxA family. Homodimer. It depends on Zn(2+) as a cofactor. Mg(2+) is required as a cofactor. The cofactor is Co(2+).

Its subcellular location is the cytoplasm. The catalysed reaction is 4-(phosphooxy)-L-threonine + NAD(+) = 3-amino-2-oxopropyl phosphate + CO2 + NADH. Its pathway is cofactor biosynthesis; pyridoxine 5'-phosphate biosynthesis; pyridoxine 5'-phosphate from D-erythrose 4-phosphate: step 4/5. Its function is as follows. Catalyzes the NAD(P)-dependent oxidation of 4-(phosphooxy)-L-threonine (HTP) into 2-amino-3-oxo-4-(phosphooxy)butyric acid which spontaneously decarboxylates to form 3-amino-2-oxopropyl phosphate (AHAP). The sequence is that of 4-hydroxythreonine-4-phosphate dehydrogenase from Shigella dysenteriae serotype 1 (strain Sd197).